Here is a 506-residue protein sequence, read N- to C-terminus: Galactose/methyl galactoside import ATP-binding protein MglA (506 aa).

ABC transporter domains are found at residues 14 to 249 and 264 to 506; these read LEMS…VGRS and VILE…SLHL. An ATP-binding site is contributed by 46 to 53; it reads GENGAGKS.

Belongs to the ABC transporter superfamily. Galactose/methyl galactoside importer (TC 3.A.1.2.3) family. As to quaternary structure, the complex is composed of one ATP-binding protein (MglA), two transmembrane proteins (MglC) and a solute-binding protein (MglB).

It is found in the cell inner membrane. It carries out the reaction D-galactose(out) + ATP + H2O = D-galactose(in) + ADP + phosphate + H(+). The catalysed reaction is methyl beta-D-galactoside(out) + ATP + H2O = methyl beta-D-galactoside(in) + ADP + phosphate + H(+). In terms of biological role, part of the ABC transporter complex MglABC involved in galactose/methyl galactoside import. Responsible for energy coupling to the transport system. The sequence is that of Galactose/methyl galactoside import ATP-binding protein MglA from Escherichia coli O6:K15:H31 (strain 536 / UPEC).